Here is a 371-residue protein sequence, read N- to C-terminus: 3-dehydroquinate synthase (371 aa).

NAD(+) contacts are provided by residues 70–75, 104–108, 128–129, K141, and K150; these read DAEDGK, GAVTD, and TT. Residues E183, H246, and H262 each contribute to the Zn(2+) site.

Belongs to the sugar phosphate cyclases superfamily. Dehydroquinate synthase family. Co(2+) serves as cofactor. Requires Zn(2+) as cofactor. The cofactor is NAD(+).

Its subcellular location is the cytoplasm. It catalyses the reaction 7-phospho-2-dehydro-3-deoxy-D-arabino-heptonate = 3-dehydroquinate + phosphate. It functions in the pathway metabolic intermediate biosynthesis; chorismate biosynthesis; chorismate from D-erythrose 4-phosphate and phosphoenolpyruvate: step 2/7. In terms of biological role, catalyzes the conversion of 3-deoxy-D-arabino-heptulosonate 7-phosphate (DAHP) to dehydroquinate (DHQ). This is 3-dehydroquinate synthase from Saccharopolyspora erythraea (strain ATCC 11635 / DSM 40517 / JCM 4748 / NBRC 13426 / NCIMB 8594 / NRRL 2338).